A 386-amino-acid polypeptide reads, in one-letter code: Putative matrix metalloproteinase (386 aa).

Positions 1–34 are cleaved as a signal peptide; that stretch reads MPTAHFQHSIRYLNVTNMLIFSIISFLLIYQTNS. Asn14 and Asn58 each carry an N-linked (GlcNAc...) asparagine; by host glycan. His186 lines the Zn(2+) pocket. Glu187 is a catalytic residue. 2 residues coordinate Zn(2+): His190 and His196. Residues 235–258 form a disordered region; sequence NEQSTHQSTRHRPHRRPSPDGSCR.

The protein belongs to the peptidase M10A family. It depends on Zn(2+) as a cofactor.

The protein is Putative matrix metalloproteinase of Spodoptera frugiperda (Fall armyworm).